Here is a 437-residue protein sequence, read N- to C-terminus: Epsilon-sarcoglycan (437 aa).

Topologically, residues 1 to 317 are extracellular; sequence MQLPWWWELG…LKSRDYYTDF (317 aa). An N-linked (GlcNAc...) asparagine glycan is attached at N200. The helical transmembrane segment at 318–338 threads the bilayer; it reads LVTLAVPSAVALVLFLILAYI. The Cytoplasmic portion of the chain corresponds to 339 to 437; that stretch reads MCCRREGVEK…QQQTTGKWYS (99 aa). A disordered region spans residues 418 to 437; sequence QNLPHQTQIPQQQTTGKWYS.

This sequence belongs to the sarcoglycan alpha/epsilon family. Post-translationally, N-glycosylated. In terms of processing, ubiquitinated, leading to its degradation by the proteasome.

The protein resides in the cell membrane. It is found in the sarcolemma. Its subcellular location is the cytoplasm. It localises to the cytoskeleton. The protein localises to the cell projection. The protein resides in the dendrite. It is found in the golgi apparatus. Functionally, component of the sarcoglycan complex, a subcomplex of the dystrophin-glycoprotein complex which forms a link between the F-actin cytoskeleton and the extracellular matrix. This is Epsilon-sarcoglycan (SGCE) from Bos taurus (Bovine).